The chain runs to 448 residues: FAD-linked oxidoreductase nodO (448 aa).

An FAD-binding PCMH-type domain is found at 35–206 (PEHFPLAIVK…IRFFLKTCPL (172 aa)).

The protein belongs to the oxygen-dependent FAD-linked oxidoreductase family. The cofactor is FAD.

It participates in secondary metabolite biosynthesis. Functionally, FAD-linked oxidoreductase; part of the gene cluster that mediates the biosynthesis of the indole diterpenes nodulisporic acids (NA). Nodulisporic acid A (NAA) and its chemically modified derivatives are of particular significance because of their highly potent insecticidal activity against blood-feeding arthropods and lack of observable adverse effects on mammals, in particular the tremogenicity associated with the paspaline-derived IDTs is not observed. The geranylgeranyl diphosphate (GGPP) synthase ggs1, localized outside of the cluster, is proposed to catalyze the first step in nodulisporic acid biosynthesis via conversion of farnesyl pyrophosphate and isopentyl pyrophosphate into geranylgeranyl pyrophosphate (GGPP). Condensation of indole-3-glycerol phosphate with GGPP by the prenyl transferase nodC then forms 3-geranylgeranylindole (3-GGI). Epoxidation by the FAD-dependent monooxygenase nodM leads to a single-epoxidized-GGI that is substrate of the terpene cyclase nodB for cyclization to yield emindole SB. The terminal methyl carbon, C28, of emindole SB is then oxidized by the cytochrome P450 monooxygenase nodW to produce nodulisporic acid F (NAF), the pentacyclic core of NAA. NAF is converted to nodulisporic acid E (NAE) via prenylation. This step is probably performed by one of the indole diterpene prenyltransferases nodD1 or nodD2. Several oxidation steps performed by the FAD-linked oxidoreductase nodO and one of the cytochrome P450 monooxygenase nodR, nodX or nodZ further convert NAE to nodulisporic acid D (NAD). NAD is substrate of cytochrome P450 monooxygenase nodJ to produce the precursor of nodulisporic acid C (NAC), converted to NAC by one of the indole diterpene prenyltransferases nodD1 or nodD2. The FAD-dependent monooxygenase nodY2 then oxidizes NAC to nodulisporic acid B (NAB). Finally NAB is converted to NAA by one of the cytochrome P450 monooxygenases nodR, nodX or nodZ. The protein is FAD-linked oxidoreductase nodO of Hypoxylon pulicicidum.